The following is a 295-amino-acid chain: 4-hydroxy-tetrahydrodipicolinate synthase (295 aa).

T46 contacts pyruvate. Y134 acts as the Proton donor/acceptor in catalysis. K162 (schiff-base intermediate with substrate) is an active-site residue. I205 provides a ligand contact to pyruvate.

The protein belongs to the DapA family. In terms of assembly, homotetramer; dimer of dimers.

It is found in the cytoplasm. The catalysed reaction is L-aspartate 4-semialdehyde + pyruvate = (2S,4S)-4-hydroxy-2,3,4,5-tetrahydrodipicolinate + H2O + H(+). Its pathway is amino-acid biosynthesis; L-lysine biosynthesis via DAP pathway; (S)-tetrahydrodipicolinate from L-aspartate: step 3/4. In terms of biological role, catalyzes the condensation of (S)-aspartate-beta-semialdehyde [(S)-ASA] and pyruvate to 4-hydroxy-tetrahydrodipicolinate (HTPA). The protein is 4-hydroxy-tetrahydrodipicolinate synthase of Anaeromyxobacter sp. (strain Fw109-5).